The sequence spans 144 residues: uncharacterized protein (144 aa).

The protein belongs to the mimivirus L885/R898 family.

This is an uncharacterized protein from Acanthamoeba polyphaga (Amoeba).